The chain runs to 515 residues: ATP synthase subunit alpha (515 aa).

169 to 176 (GDRQTGKT) serves as a coordination point for ATP.

The protein belongs to the ATPase alpha/beta chains family. In terms of assembly, F-type ATPases have 2 components, CF(1) - the catalytic core - and CF(0) - the membrane proton channel. CF(1) has five subunits: alpha(3), beta(3), gamma(1), delta(1), epsilon(1). CF(0) has three main subunits: a(1), b(2) and c(9-12). The alpha and beta chains form an alternating ring which encloses part of the gamma chain. CF(1) is attached to CF(0) by a central stalk formed by the gamma and epsilon chains, while a peripheral stalk is formed by the delta and b chains.

It localises to the cell inner membrane. It catalyses the reaction ATP + H2O + 4 H(+)(in) = ADP + phosphate + 5 H(+)(out). Functionally, produces ATP from ADP in the presence of a proton gradient across the membrane. The alpha chain is a regulatory subunit. The sequence is that of ATP synthase subunit alpha from Neisseria meningitidis serogroup C / serotype 2a (strain ATCC 700532 / DSM 15464 / FAM18).